The chain runs to 648 residues: Mitochondrial Rho GTPase 3 (648 aa).

The Cytoplasmic segment spans residues 1-621 (MWMGVGDSSG…KRSCKLNNRS (621 aa)). A Phosphoserine modification is found at Ser-11. The Miro 1 domain occupies 12 to 179 (PKPIRIVVVG…LYYAQKAVID (168 aa)). EF-hand domains are found at residues 195-230 (RCIA…CFDT) and 316-351 (VAIE…APES). Positions 208, 210, 212, 219, 329, 331, 333, 335, and 340 each coordinate Ca(2+). Residues 425–599 (RKVVQCFVFG…FRKILTAAEN (175 aa)) form the Miro 2 domain. Residues 622–644 (LMAVSIGTAVLIAGLASFRLYTA) form a helical membrane-spanning segment. At 645-648 (RKQS) the chain is on the mitochondrial intermembrane side.

It belongs to the mitochondrial Rho GTPase family. Expressed at very low levels in roots, leaves, stems, flowers and siliques.

It is found in the mitochondrion outer membrane. In terms of biological role, mitochondrial GTPase that may be involved in mitochondrion development. The chain is Mitochondrial Rho GTPase 3 from Arabidopsis thaliana (Mouse-ear cress).